A 186-amino-acid chain; its full sequence is Ribosome-recycling factor (186 aa).

This sequence belongs to the RRF family.

The protein resides in the cytoplasm. Its function is as follows. Responsible for the release of ribosomes from messenger RNA at the termination of protein biosynthesis. May increase the efficiency of translation by recycling ribosomes from one round of translation to another. The chain is Ribosome-recycling factor from Leptothrix cholodnii (strain ATCC 51168 / LMG 8142 / SP-6) (Leptothrix discophora (strain SP-6)).